The sequence spans 474 residues: Glutamate--tRNA ligase (474 aa).

A 'HIGH' region motif is present at residues 9–19; the sequence is PSPTGYLHVGG. A 'KMSKS' region motif is present at residues 240–244; the sequence is KLSKR. ATP is bound at residue Lys243.

This sequence belongs to the class-I aminoacyl-tRNA synthetase family. Glutamate--tRNA ligase type 1 subfamily. As to quaternary structure, monomer.

It localises to the cytoplasm. The enzyme catalyses tRNA(Glu) + L-glutamate + ATP = L-glutamyl-tRNA(Glu) + AMP + diphosphate. Its function is as follows. Catalyzes the attachment of glutamate to tRNA(Glu) in a two-step reaction: glutamate is first activated by ATP to form Glu-AMP and then transferred to the acceptor end of tRNA(Glu). The polypeptide is Glutamate--tRNA ligase (Vibrio cholerae serotype O1 (strain ATCC 39315 / El Tor Inaba N16961)).